Reading from the N-terminus, the 160-residue chain is MAKQKKHPTGTIAQNKKARHDYFIEHKFEAGLVLSGWEVKSLRAGKAHLTDSYVLLKDGEAWLFGSHITPLTTASTHVIADPTRTRKLLLNKRELERVEAAVAQKGYTCVALALYWSKHLIKCEIALGKGKKEFDKRDTMRERDSNRELQRAVRNKGKEE.

Residues 132-160 (KEFDKRDTMRERDSNRELQRAVRNKGKEE) are disordered.

The protein belongs to the SmpB family.

Its subcellular location is the cytoplasm. Required for rescue of stalled ribosomes mediated by trans-translation. Binds to transfer-messenger RNA (tmRNA), required for stable association of tmRNA with ribosomes. tmRNA and SmpB together mimic tRNA shape, replacing the anticodon stem-loop with SmpB. tmRNA is encoded by the ssrA gene; the 2 termini fold to resemble tRNA(Ala) and it encodes a 'tag peptide', a short internal open reading frame. During trans-translation Ala-aminoacylated tmRNA acts like a tRNA, entering the A-site of stalled ribosomes, displacing the stalled mRNA. The ribosome then switches to translate the ORF on the tmRNA; the nascent peptide is terminated with the 'tag peptide' encoded by the tmRNA and targeted for degradation. The ribosome is freed to recommence translation, which seems to be the essential function of trans-translation. The protein is SsrA-binding protein of Pseudomonas putida (strain ATCC 47054 / DSM 6125 / CFBP 8728 / NCIMB 11950 / KT2440).